A 248-amino-acid polypeptide reads, in one-letter code: Protein FAM133A (248 aa).

Residues 68 to 80 show a composition bias toward basic and acidic residues; it reads NWKKELEKSREKL. The interval 68-248 is disordered; sequence NWKKELEKSR…KKSGSSHKSR (181 aa). A compositionally biased stretch (basic residues) spans 90–102; it reads KRERKKKRKKKSC. Residues 103–118 show a composition bias toward low complexity; sequence RSSSSSSSSDSSSSSS. A compositionally biased stretch (basic residues) spans 127–138; it reads QGKRRKKKKNRS. 3 stretches are compositionally biased toward basic and acidic residues: residues 147–156, 163–175, and 211–220; these read HESESESKES, SKDE…DVRS, and RCEEREQAKE. Residues 221 to 248 show a composition bias toward basic residues; that stretch reads KVKKKKKKQHKKHSKKKKKKSGSSHKSR.

This sequence belongs to the FAM133 family.

This chain is Protein FAM133A (FAM133A), found in Homo sapiens (Human).